We begin with the raw amino-acid sequence, 448 residues long: Methylenetetrahydrofolate--tRNA-(uracil-5-)-methyltransferase TrmFO (448 aa).

An FAD-binding site is contributed by 13-18; sequence GAGLAG.

This sequence belongs to the MnmG family. TrmFO subfamily. FAD serves as cofactor.

The protein localises to the cytoplasm. It catalyses the reaction uridine(54) in tRNA + (6R)-5,10-methylene-5,6,7,8-tetrahydrofolate + NADH + H(+) = 5-methyluridine(54) in tRNA + (6S)-5,6,7,8-tetrahydrofolate + NAD(+). The catalysed reaction is uridine(54) in tRNA + (6R)-5,10-methylene-5,6,7,8-tetrahydrofolate + NADPH + H(+) = 5-methyluridine(54) in tRNA + (6S)-5,6,7,8-tetrahydrofolate + NADP(+). Its function is as follows. Catalyzes the folate-dependent formation of 5-methyl-uridine at position 54 (M-5-U54) in all tRNAs. This chain is Methylenetetrahydrofolate--tRNA-(uracil-5-)-methyltransferase TrmFO, found in Streptococcus pyogenes serotype M4 (strain MGAS10750).